A 714-amino-acid polypeptide reads, in one-letter code: 2'-5'-oligoadenylate synthase 2 (714 aa).

G2 carries the N-myristoyl glycine lipid modification. OAS domain regions lie at residues 11–336 and 344–683; these read KPSE…SWNV and TPGH…WNVP. An ATP-binding site is contributed by S397. D409 and D480 together coordinate Mg(2+). ATP is bound by residues R544 and K547.

It belongs to the 2-5A synthase family. Homodimer. The cofactor is Mg(2+). In terms of processing, myristoylation is not essential for its activity. Glycosylated. Glycosylation is essential for its activity.

Its subcellular location is the cytoplasm. It is found in the perinuclear region. It carries out the reaction 3 ATP = 5'-triphosphoadenylyl-(2'-&gt;5')-adenylyl-(2'-&gt;5')-adenosine + 2 diphosphate. Produced as a latent enzyme which is activated by double stranded RNA (dsRNA) generated during the course of viral infection. The dsRNA activator must be at least 15 nucleotides long, and no modification of the 2'-hydroxyl group is tolerated. ssRNA or dsDNA do not act as activators. Strongly inhibited by copper, iron and zinc ions. Partially inhibited by cobalt and nickel ions. Functionally, interferon-induced, dsRNA-activated antiviral enzyme which plays a critical role in cellular innate antiviral response. Activated by detection of double stranded RNA (dsRNA): polymerizes higher oligomers of 2'-5'-oligoadenylates (2-5A) from ATP which then bind to the inactive monomeric form of ribonuclease L (RNASEL) leading to its dimerization and subsequent activation. Activation of RNASEL leads to degradation of cellular as well as viral RNA, resulting in the inhibition of protein synthesis, thus terminating viral replication. Can mediate the antiviral effect via the classical RNASEL-dependent pathway or an alternative antiviral pathway independent of RNASEL. In addition, it may also play a role in other cellular processes such as apoptosis, cell growth, differentiation and gene regulation. May act as a negative regulator of lactation, stopping lactation in virally infected mammary gland lobules, thereby preventing transmission of viruses to neonates. Non-infected lobules would not be affected, allowing efficient pup feeding during infection. The chain is 2'-5'-oligoadenylate synthase 2 (OAS2) from Bos taurus (Bovine).